The following is a 365-amino-acid chain: P2Y purinoceptor 4 (365 aa).

Topologically, residues 1–34 (MASTESSLLRSLGLSPGPGSSEVELDCWFDEDFK) are extracellular. Residues 35-61 (FILLPVSYAVVFVLGLGLNAPTLWLFI) traverse the membrane as a helical segment. Residues 62 to 72 (FRLRPWDATAT) lie on the Cytoplasmic side of the membrane. The chain crosses the membrane as a helical span at residues 73–95 (YMFHLALSDTLYVLSLPTLIYYY). The Extracellular segment spans residues 96–112 (AAHNHWPFGTEICKFVR). An intrachain disulfide couples Cys108 to Cys185. Residues 113-131 (FLFYWNLYCSVLFLTCISV) traverse the membrane as a helical segment. Residues 132–154 (HRYLGICHPLRALRWGRPRLAGL) are Cytoplasmic-facing. Residues 155–174 (LCLAVWLVVAGCLVPNLFFV) form a helical membrane-spanning segment. Residues 175–196 (TTSNKGTTVLCHDTTRPEEFDH) lie on the Extracellular side of the membrane. Residues 197 to 222 (YVHFSSAVMGLLFGVPCLVTLVCYGL) traverse the membrane as a helical segment. Topologically, residues 223-246 (MARRLYQPLPGSAQSSSRLRSLRT) are cytoplasmic. A helical transmembrane segment spans residues 247 to 269 (IAVVLTVFAVCFVPFHITRTIYY). Residues 270 to 287 (LARLLEADCRVLNIVNVV) lie on the Extracellular side of the membrane. Residues 288 to 309 (YKVTRPLASANSCLDPVLYLLT) traverse the membrane as a helical segment. At 310–365 (GDKYRRQLRQLCGGGKPQPRTAASSLALVSLPEDSSCRWAATPQDSSCSTPRADRL) the chain is on the cytoplasmic side. Phosphoserine occurs at positions 333 and 334.

The protein belongs to the G-protein coupled receptor 1 family. In terms of processing, phosphorylation of Ser-333 and Ser-334 is a key step in agonist-dependent desensitization and loss of surface P2RY4. This phosphorylation does not involve PKC, nor other calcium activated kinases. In terms of tissue distribution, pancreas.

Its subcellular location is the cell membrane. Functionally, receptor for UTP and UDP coupled to G-proteins that activate a phosphatidylinositol-calcium second messenger system. Not activated by ATP or ADP. The chain is P2Y purinoceptor 4 (P2RY4) from Homo sapiens (Human).